Consider the following 305-residue polypeptide: Aspartate carbamoyltransferase catalytic subunit (305 aa).

Residues Arg-54 and Thr-55 each coordinate carbamoyl phosphate. L-aspartate is bound at residue Lys-83. 3 residues coordinate carbamoyl phosphate: Arg-104, His-132, and Gln-135. Positions 165 and 226 each coordinate L-aspartate. Leu-265 and Pro-266 together coordinate carbamoyl phosphate.

The protein belongs to the aspartate/ornithine carbamoyltransferase superfamily. ATCase family. As to quaternary structure, heterooligomer of catalytic and regulatory chains.

It catalyses the reaction carbamoyl phosphate + L-aspartate = N-carbamoyl-L-aspartate + phosphate + H(+). It participates in pyrimidine metabolism; UMP biosynthesis via de novo pathway; (S)-dihydroorotate from bicarbonate: step 2/3. Functionally, catalyzes the condensation of carbamoyl phosphate and aspartate to form carbamoyl aspartate and inorganic phosphate, the committed step in the de novo pyrimidine nucleotide biosynthesis pathway. This is Aspartate carbamoyltransferase catalytic subunit from Pyrobaculum calidifontis (strain DSM 21063 / JCM 11548 / VA1).